Reading from the N-terminus, the 571-residue chain is Kinesin light chain (571 aa).

Residues 54–160 adopt a coiled-coil conformation; sequence LLTSMKTIRK…KKHLEFMNEM (107 aa). Residues 167–177 show a composition bias toward basic and acidic residues; that stretch reads EAQVNEEKESE. The interval 167–210 is disordered; it reads EAQVNEEKESEQSSLDLGFPDDDDDGGQPEVLSPTQPSAMAQAA. TPR repeat units lie at residues 220 to 253, 262 to 295, 304 to 337, 346 to 379, 388 to 421, and 471 to 504; these read LRTL…LEKT, ATML…REKT, AATL…REKV, AKQL…YQKE, AKTK…AHEK, and TTTL…RKSA. Residues 518-571 are disordered; that stretch reads GSDFSKGQSPKDRKRSNSRDRNRRDSMDSVSYEKSGDGDEHEKSKLHVGTSHKQ. Basic and acidic residues-rich tracts occupy residues 526 to 544 and 551 to 562; these read SPKD…RDSM and KSGDGDEHEKSK.

It belongs to the kinesin light chain family. Oligomeric complex composed of two heavy chains and two light chains.

It localises to the cytoplasm. Its subcellular location is the cytoskeleton. Its function is as follows. Kinesin is a microtubule-associated force-producing protein that may play a role in organelle transport. The light chain may function in coupling of cargo to the heavy chain or in the modulation of its ATPase activity. The protein is Kinesin light chain of Doryteuthis pealeii (Longfin inshore squid).